The chain runs to 188 residues: Elongation factor P (188 aa).

It belongs to the elongation factor P family.

It is found in the cytoplasm. It functions in the pathway protein biosynthesis; polypeptide chain elongation. Involved in peptide bond synthesis. Stimulates efficient translation and peptide-bond synthesis on native or reconstituted 70S ribosomes in vitro. Probably functions indirectly by altering the affinity of the ribosome for aminoacyl-tRNA, thus increasing their reactivity as acceptors for peptidyl transferase. The sequence is that of Elongation factor P from Bradyrhizobium sp. (strain BTAi1 / ATCC BAA-1182).